Reading from the N-terminus, the 447-residue chain is Argininosuccinate synthase (447 aa).

ATP-binding positions include 17-25 (AFSGGLDTS) and Ala-43. Tyr-99 contributes to the L-citrulline binding site. Positions 129 and 131 each coordinate ATP. The L-aspartate site is built by Thr-131, Asn-135, and Asp-136. Asn-135 is a binding site for L-citrulline. Asp-136 is a binding site for ATP. Arg-139 and Ser-192 together coordinate L-citrulline. Asp-194 is a binding site for ATP. The L-citrulline site is built by Thr-201, Glu-203, and Glu-280.

Belongs to the argininosuccinate synthase family. Type 2 subfamily. Homotetramer.

It localises to the cytoplasm. The enzyme catalyses L-citrulline + L-aspartate + ATP = 2-(N(omega)-L-arginino)succinate + AMP + diphosphate + H(+). It functions in the pathway amino-acid biosynthesis; L-arginine biosynthesis; L-arginine from L-ornithine and carbamoyl phosphate: step 2/3. This chain is Argininosuccinate synthase, found in Janthinobacterium sp. (strain Marseille) (Minibacterium massiliensis).